Consider the following 97-residue polypeptide: NADH-quinone oxidoreductase subunit K (97 aa).

3 helical membrane passes run 1-21 (MSEYLILCSILFSLGAFGVLY), 25-45 (ILVMFMCIELMLNSVNLLMVY), and 57-77 (VFVFFIMAVAAAEITIGLAIL).

This sequence belongs to the complex I subunit 4L family. As to quaternary structure, NDH-1 is composed of 14 different subunits. Subunits NuoA, H, J, K, L, M, N constitute the membrane sector of the complex.

The protein localises to the cell inner membrane. The catalysed reaction is a quinone + NADH + 5 H(+)(in) = a quinol + NAD(+) + 4 H(+)(out). NDH-1 shuttles electrons from NADH, via FMN and iron-sulfur (Fe-S) centers, to quinones in the respiratory chain. The immediate electron acceptor for the enzyme in this species is believed to be a menaquinone. Couples the redox reaction to proton translocation (for every two electrons transferred, four hydrogen ions are translocated across the cytoplasmic membrane), and thus conserves the redox energy in a proton gradient. The protein is NADH-quinone oxidoreductase subunit K of Cytophaga hutchinsonii (strain ATCC 33406 / DSM 1761 / CIP 103989 / NBRC 15051 / NCIMB 9469 / D465).